A 266-amino-acid polypeptide reads, in one-letter code: Small ribosomal subunit protein uS3 (266 aa).

The KH type-2 domain maps to 39-107 (VREYLKKKLK…PVHVNIEEIR (69 aa)). Residues 214-266 (PVVEEVTEDKRPRRNARPGDRRPRRDGEGGAPGARRGGPRRGAGKPEDGKTGE) form a disordered region. Composition is skewed to basic and acidic residues over residues 230–241 (RPGDRRPRRDGE) and 257–266 (GKPEDGKTGE).

It belongs to the universal ribosomal protein uS3 family. Part of the 30S ribosomal subunit. Forms a tight complex with proteins S10 and S14.

Functionally, binds the lower part of the 30S subunit head. Binds mRNA in the 70S ribosome, positioning it for translation. This Burkholderia mallei (strain NCTC 10247) protein is Small ribosomal subunit protein uS3.